We begin with the raw amino-acid sequence, 126 residues long: Integrin alpha-M (126 aa).

N-linked (GlcNAc...) asparagine glycans are attached at residues N25, N78, and N106.

This sequence belongs to the integrin alpha chain family. In terms of assembly, heterodimer of an alpha and a beta chain. ITGAM associates with ITGB2. Found in a complex with CD177 and ITGB2/CD18. Interacts with JAM3. Interacts with THBD. Interacts with TMEM268; this interaction inhibits ITGAM degradation via the endosome-lysosome pathway.

The protein localises to the cell membrane. Its subcellular location is the membrane raft. In terms of biological role, integrin ITGAM/ITGB2 is implicated in various adhesive interactions of monocytes, macrophages and granulocytes as well as in mediating the uptake of complement-coated particles. It is identical with CR-3, the receptor for the iC3b fragment of the third complement component. It probably recognizes the R-G-D peptide in C3b. Integrin ITGAM/ITGB2 is also a receptor for fibrinogen, factor X and ICAM1. It recognizes P1 and P2 peptides of fibrinogen gamma chain. Regulates neutrophil migration. In association with beta subunit ITGB2/CD18, required for CD177-PRTN3-mediated activation of TNF primed neutrophils. May regulate phagocytosis-induced apoptosis in extravasated neutrophils. May play a role in mast cell development. Required with TYROBP/DAP12 in microglia to control production of microglial superoxide ions which promote the neuronal apoptosis that occurs during brain development. This is Integrin alpha-M (ITGAM) from Cavia porcellus (Guinea pig).